The sequence spans 314 residues: Ribosomal protein L11 methyltransferase (314 aa).

T161, G182, D204, and N248 together coordinate S-adenosyl-L-methionine.

The protein belongs to the methyltransferase superfamily. PrmA family.

Its subcellular location is the cytoplasm. The catalysed reaction is L-lysyl-[protein] + 3 S-adenosyl-L-methionine = N(6),N(6),N(6)-trimethyl-L-lysyl-[protein] + 3 S-adenosyl-L-homocysteine + 3 H(+). Methylates ribosomal protein L11. This is Ribosomal protein L11 methyltransferase from Listeria monocytogenes serotype 4b (strain CLIP80459).